Consider the following 138-residue polypeptide: ATP synthase epsilon chain (138 aa).

The protein belongs to the ATPase epsilon chain family. F-type ATPases have 2 components, CF(1) - the catalytic core - and CF(0) - the membrane proton channel. CF(1) has five subunits: alpha(3), beta(3), gamma(1), delta(1), epsilon(1). CF(0) has three main subunits: a, b and c.

The protein localises to the cell membrane. Functionally, produces ATP from ADP in the presence of a proton gradient across the membrane. This Streptococcus mutans serotype c (strain ATCC 700610 / UA159) protein is ATP synthase epsilon chain (atpC).